Consider the following 91-residue polypeptide: DNA-binding protein HU (91 aa).

The protein belongs to the bacterial histone-like protein family. As to quaternary structure, homodimer.

Histone-like DNA-binding protein which is capable of wrapping DNA to stabilize it, and thus to prevent its denaturation under extreme environmental conditions. This is DNA-binding protein HU (hup) from Lactococcus lactis subsp. lactis (strain IL1403) (Streptococcus lactis).